The following is a 429-amino-acid chain: UDP-N-acetylglucosamine 1-carboxyvinyltransferase (429 aa).

22-23 (KN) provides a ligand contact to phosphoenolpyruvate. Arg-102 serves as a coordination point for UDP-N-acetyl-alpha-D-glucosamine. Residue Cys-126 is the Proton donor of the active site. Cys-126 bears the 2-(S-cysteinyl)pyruvic acid O-phosphothioketal mark. Residues 131–135 (RPVDL), Asp-316, and Ile-338 contribute to the UDP-N-acetyl-alpha-D-glucosamine site.

The protein belongs to the EPSP synthase family. MurA subfamily.

It localises to the cytoplasm. The enzyme catalyses phosphoenolpyruvate + UDP-N-acetyl-alpha-D-glucosamine = UDP-N-acetyl-3-O-(1-carboxyvinyl)-alpha-D-glucosamine + phosphate. It functions in the pathway cell wall biogenesis; peptidoglycan biosynthesis. Functionally, cell wall formation. Adds enolpyruvyl to UDP-N-acetylglucosamine. The protein is UDP-N-acetylglucosamine 1-carboxyvinyltransferase of Methylocella silvestris (strain DSM 15510 / CIP 108128 / LMG 27833 / NCIMB 13906 / BL2).